The sequence spans 434 residues: Tol-Pal system protein TolB (434 aa).

The first 21 residues, 1 to 21, serve as a signal peptide directing secretion; that stretch reads MTVRRALALAALALAVSPALA. Positions 411–434 are disordered; the sequence is GDRQTPVTSGKTDLAAPAWGPLAP.

The protein belongs to the TolB family. In terms of assembly, the Tol-Pal system is composed of five core proteins: the inner membrane proteins TolA, TolQ and TolR, the periplasmic protein TolB and the outer membrane protein Pal. They form a network linking the inner and outer membranes and the peptidoglycan layer.

Its subcellular location is the periplasm. Functionally, part of the Tol-Pal system, which plays a role in outer membrane invagination during cell division and is important for maintaining outer membrane integrity. This Anaeromyxobacter dehalogenans (strain 2CP-1 / ATCC BAA-258) protein is Tol-Pal system protein TolB.